Here is a 432-residue protein sequence, read N- to C-terminus: Enolase (432 aa).

Position 167 (glutamine 167) interacts with (2R)-2-phosphoglycerate. Glutamate 209 serves as the catalytic Proton donor. Positions 246, 290, and 317 each coordinate Mg(2+). Positions 342, 371, 372, and 393 each coordinate (2R)-2-phosphoglycerate. Lysine 342 functions as the Proton acceptor in the catalytic mechanism.

This sequence belongs to the enolase family. Component of the RNA degradosome, a multiprotein complex involved in RNA processing and mRNA degradation. Requires Mg(2+) as cofactor.

It is found in the cytoplasm. The protein resides in the secreted. It localises to the cell surface. It catalyses the reaction (2R)-2-phosphoglycerate = phosphoenolpyruvate + H2O. It participates in carbohydrate degradation; glycolysis; pyruvate from D-glyceraldehyde 3-phosphate: step 4/5. Its function is as follows. Catalyzes the reversible conversion of 2-phosphoglycerate (2-PG) into phosphoenolpyruvate (PEP). It is essential for the degradation of carbohydrates via glycolysis. The protein is Enolase of Cronobacter sakazakii (strain ATCC BAA-894) (Enterobacter sakazakii).